We begin with the raw amino-acid sequence, 742 residues long: uncharacterized protein (742 aa).

The interval 1–102 is disordered; that stretch reads MMLLKRSNDN…FTQTKPNNTD (102 aa). A compositionally biased stretch (low complexity) spans 18 to 28; it reads NRQNRQNNRQN. Residues 48-57 show a composition bias toward basic and acidic residues; the sequence is RDSSRMDPVD. Composition is skewed to polar residues over residues 60–69 and 77–99; these read TLISFTSGKP and HDTGTNKYSSSKLSETFTQTKPN.

This is an uncharacterized protein from Acanthamoeba polyphaga mimivirus (APMV).